Reading from the N-terminus, the 596-residue chain is Neuroepithelial cell-transforming gene 1 protein (596 aa).

Residue Met-1 is modified to N-acetylmethionine. Residues 1-44 (MEPELAAQKQPRPRRRSRRASGLSTEGATGPSADTSGSELDGRC) are disordered. The segment at 1 to 74 (MEPELAAQKQ…LKRKRREKDD (74 aa)) is necessary for nuclear localization. The Nuclear localization signal signature appears at 12 to 19 (RPRRRSRR). Phosphoserine occurs at positions 21 and 32. Polar residues predominate over residues 22 to 38 (GLSTEGATGPSADTSGS). Residues 66-72 (KRKRREK) carry the Nuclear localization signal motif. A phosphoserine mark is found at Ser-100, Ser-106, and Ser-122. Residues 127–146 (GDHRSPASAQKFSSRSTVPT) form a disordered region. Over residues 133–145 (ASAQKFSSRSTVP) the composition is skewed to polar residues. The DH domain maps to 174-356 (RRQEAIYEMS…QGVLSDINLK (183 aa)). A PH domain is found at 386–501 (VLLCHGELRS…WFNCIRAAIA (116 aa)). At Ser-508 the chain carries Phosphoserine. The disordered stretch occupies residues 562-596 (MAEDSKSLKTHQTQPGIRRARDKALSGGKRKETLV).

As to quaternary structure, interacts with RHOA in its GTP- and GDP-bound states, and with CDC42 in its GTP-bound state. Interacts with the PDZ 1 domain of BAIAP1. As to expression, widely expressed.

It is found in the cytoplasm. It localises to the nucleus. Functionally, acts as a guanine nucleotide exchange factor (GEF) for RhoA GTPase. May be involved in activation of the SAPK/JNK pathway Stimulates genotoxic stress-induced RHOB activity in breast cancer cells leading to their cell death. The sequence is that of Neuroepithelial cell-transforming gene 1 protein (NET1) from Homo sapiens (Human).